The following is a 1110-amino-acid chain: Nonribisomal peptide synthetase benY (1110 aa).

An adenylation region spans residues 47–443 (RALEFPEKIA…GRKDHQLKVR (397 aa)). The Carrier domain maps to 575–651 (TLETESEKIL…EMAQSARVVP (77 aa)). An O-(pantetheine 4'-phosphoryl)serine modification is found at serine 612. Residues 713-1025 (YILDGDVDFD…IFHHQNIDTK (313 aa)) are condensation.

The protein belongs to the NRP synthetase family.

It functions in the pathway secondary metabolite biosynthesis. Functionally, nonribisomal peptide synthetase; part of the gene cluster that mediates the biosynthesis of benzomalvin A and D. The pathway begins with the loading of amino acid precursors onto the A domains of the non ribosomal peptide synthetases benY and benZ. BenY and the A1 domain of benZ are loaded with anthranilate (Anth), while the A2 domain of benZ is loaded with phenylalanine (Phe). N-methylation of Phe by the methyltransferase benX may happen before loading of Phe onto benZ, after loading of Phe, or after dipeptide formation. Condensation of Anth with the secondary amine of NmPhe or Phe is catalyzed by the C1 domain of benZ, forming a dipeptide intermediate. This is followed by in trans condensation of the Anth-NmPhe dipeptide with Anth bound to the T domain of benY by the C2 domain of benZ to form the linear tripeptide Anth-NmPhe-Anth. Cyclization and release of the tripeptide is then catalyzed by the C-terminal C domain of benY and the resulting 11-member macrocyclic intermediate is expected to spontaneously collapse to form the benzodiazepine core. Benzomalvin A is in conformational equilibrium with its atropisomer, benzomalvin D. The protein is Nonribisomal peptide synthetase benY of Aspergillus terreus.